A 569-amino-acid chain; its full sequence is Proline--tRNA ligase (569 aa).

It belongs to the class-II aminoacyl-tRNA synthetase family. ProS type 1 subfamily. As to quaternary structure, homodimer.

It is found in the cytoplasm. The enzyme catalyses tRNA(Pro) + L-proline + ATP = L-prolyl-tRNA(Pro) + AMP + diphosphate. In terms of biological role, catalyzes the attachment of proline to tRNA(Pro) in a two-step reaction: proline is first activated by ATP to form Pro-AMP and then transferred to the acceptor end of tRNA(Pro). As ProRS can inadvertently accommodate and process non-cognate amino acids such as alanine and cysteine, to avoid such errors it has two additional distinct editing activities against alanine. One activity is designated as 'pretransfer' editing and involves the tRNA(Pro)-independent hydrolysis of activated Ala-AMP. The other activity is designated 'posttransfer' editing and involves deacylation of mischarged Ala-tRNA(Pro). The misacylated Cys-tRNA(Pro) is not edited by ProRS. The sequence is that of Proline--tRNA ligase from Legionella pneumophila subsp. pneumophila (strain Philadelphia 1 / ATCC 33152 / DSM 7513).